The sequence spans 142 residues: Hemoglobin subunit alpha-A (142 aa).

Residues 2-142 (VLSANDKTNV…VGNVLTAKYR (141 aa)) enclose the Globin domain. O2 is bound at residue H59. Residue H88 coordinates heme b.

The protein belongs to the globin family. Heterotetramer of two alpha chains and two beta chains. Red blood cells.

Involved in oxygen transport from the lung to the various peripheral tissues. This is Hemoglobin subunit alpha-A (HBAA) from Accipiter gentilis (Northern goshawk).